Consider the following 507-residue polypeptide: Histidine ammonia-lyase (507 aa).

Residues 141-143 (ASG) constitute a cross-link (5-imidazolinone (Ala-Gly)). Serine 142 carries the 2,3-didehydroalanine (Ser) modification.

Belongs to the PAL/histidase family. Post-translationally, contains an active site 4-methylidene-imidazol-5-one (MIO), which is formed autocatalytically by cyclization and dehydration of residues Ala-Ser-Gly.

It is found in the cytoplasm. It carries out the reaction L-histidine = trans-urocanate + NH4(+). The protein operates within amino-acid degradation; L-histidine degradation into L-glutamate; N-formimidoyl-L-glutamate from L-histidine: step 1/3. This is Histidine ammonia-lyase from Burkholderia cenocepacia (strain HI2424).